The sequence spans 43 residues: Neurotrophin-4 (43 aa).

This sequence belongs to the NGF-beta family.

Its function is as follows. NT-4 could play a role in oogenesis and/or early embryogenesis. NT-4 interacts with the low affinity NGF receptor and elicits neurite outgrowth from explanted dorsal root ganglia with no and lower activity in sympathetic and nodose ganglia, respectively. In Macrovipera lebetinus (Levantine viper), this protein is Neurotrophin-4 (NTF4).